The chain runs to 380 residues: Outer membrane protein assembly factor BamB (380 aa).

The first 18 residues, 1-18 (MVQWKHAALLALALAVVG), serve as a signal peptide directing secretion. A lipid anchor (N-palmitoyl cysteine) is attached at C19. C19 carries S-diacylglycerol cysteine lipidation.

Belongs to the BamB family. As to quaternary structure, part of the Bam complex.

The protein resides in the cell outer membrane. Its function is as follows. Part of the outer membrane protein assembly complex, which is involved in assembly and insertion of beta-barrel proteins into the outer membrane. This chain is Outer membrane protein assembly factor BamB, found in Pseudomonas aeruginosa (strain ATCC 15692 / DSM 22644 / CIP 104116 / JCM 14847 / LMG 12228 / 1C / PRS 101 / PAO1).